A 433-amino-acid polypeptide reads, in one-letter code: Trigger factor (433 aa).

A PPIase FKBP-type domain is found at 163 to 248 (GDTVNIDFSG…VNEIKFKEVP (86 aa)).

The protein belongs to the FKBP-type PPIase family. Tig subfamily.

The protein localises to the cytoplasm. It carries out the reaction [protein]-peptidylproline (omega=180) = [protein]-peptidylproline (omega=0). Involved in protein export. Acts as a chaperone by maintaining the newly synthesized protein in an open conformation. Functions as a peptidyl-prolyl cis-trans isomerase. The protein is Trigger factor of Staphylococcus aureus (strain Newman).